A 527-amino-acid polypeptide reads, in one-letter code: Bifunctional pantoate ligase/cytidylate kinase (527 aa).

Residues 1-277 (MRQLISPEAL…VGTARLIDNL (277 aa)) are pantoate--beta-alanine ligase. 27–34 (MGALHAGH) provides a ligand contact to ATP. H34 functions as the Proton donor in the catalytic mechanism. Q58 serves as a coordination point for (R)-pantoate. Beta-alanine is bound at residue Q58. 147–150 (GEKD) is an ATP binding site. Q153 contributes to the (R)-pantoate binding site. ATP-binding positions include V176 and 184 to 187 (LSSR). Positions 278-527 (TLQGRRPIIA…GQTPSPLSLG (250 aa)) are cytidylate kinase. Residues 507–527 (GLGDSSPQATPGQTPSPLSLG) form a disordered region. The span at 511 to 527 (SSPQATPGQTPSPLSLG) shows a compositional bias: polar residues.

This sequence in the N-terminal section; belongs to the pantothenate synthetase family. It in the C-terminal section; belongs to the cytidylate kinase family. Type 1 subfamily.

It localises to the cytoplasm. The enzyme catalyses (R)-pantoate + beta-alanine + ATP = (R)-pantothenate + AMP + diphosphate + H(+). It carries out the reaction CMP + ATP = CDP + ADP. It catalyses the reaction dCMP + ATP = dCDP + ADP. It functions in the pathway cofactor biosynthesis; (R)-pantothenate biosynthesis; (R)-pantothenate from (R)-pantoate and beta-alanine: step 1/1. Its function is as follows. Catalyzes the condensation of pantoate with beta-alanine in an ATP-dependent reaction via a pantoyl-adenylate intermediate. In terms of biological role, catalyzes the transfer of a phosphate group from ATP to either CMP or dCMP to form CDP or dCDP and ADP, respectively. The chain is Bifunctional pantoate ligase/cytidylate kinase from Synechococcus elongatus (strain ATCC 33912 / PCC 7942 / FACHB-805) (Anacystis nidulans R2).